We begin with the raw amino-acid sequence, 462 residues long: Putative amidase AmiB2 (462 aa).

Catalysis depends on charge relay system residues lysine 81 and serine 155. Residue serine 179 is the Acyl-ester intermediate of the active site.

Belongs to the amidase family.

It catalyses the reaction a monocarboxylic acid amide + H2O = a monocarboxylate + NH4(+). The protein is Putative amidase AmiB2 (amiB2) of Mycobacterium bovis (strain ATCC BAA-935 / AF2122/97).